The following is a 337-amino-acid chain: uncharacterized protein (337 aa).

Residues 3–174 enclose the MurNAc-LAA domain; sequence IAVRGGHNFK…IGKLIAEAIN (172 aa).

It to C.perfringens pIP404 ORF10.

This is an uncharacterized protein from Clostridium perfringens (strain 13 / Type A).